Reading from the N-terminus, the 412-residue chain is Protein png-1 (412 aa).

Positions 150, 153, 182, and 185 each coordinate Zn(2+). Residues Ala-363 to Pro-412 form a disordered region.

This sequence belongs to the transglutaminase-like superfamily. PNGase family.

This chain is Protein png-1 (un-7), found in Neurospora crassa (strain ATCC 24698 / 74-OR23-1A / CBS 708.71 / DSM 1257 / FGSC 987).